The primary structure comprises 289 residues: Segregation and condensation protein A (289 aa).

Basic and acidic residues predominate over residues 1–18 (MSEDRRSPTDEAPREGEL). Residues 1–24 (MSEDRRSPTDEAPREGELPRSPGD) form a disordered region.

The protein belongs to the ScpA family. Component of the Structural Maintenance of Chromosome (SMC) condensin-like complex composed of ScpA, ScpB and the Smc homodimer. ScpA and ScpB bind to the head domain of Smc. The presence of the three proteins is required for the association of the complex with DNA.

It localises to the cytoplasm. Functionally, a conditionally essential component of the chromosome segregation machinery. Participates in chromosomal partition during cell division. Important for positioning of ParB-parS complexes (ori of replication) and of the ter replication site, as well as for segration of the ParB-parS complex and thus chromosome segregation. May act via the formation of a condensin-like complex containing Smc, ScpA and ScpB that pulls DNA away from mid-cell into both cell halves. The protein is Segregation and condensation protein A of Myxococcus xanthus (strain DK1622).